Here is a 223-residue protein sequence, read N- to C-terminus: Glycoprotein 42 (223 aa).

The Intravirion portion of the chain corresponds to 1–8; it reads MVSFKQVR. Residues 9-29 traverse the membrane as a helical segment; sequence VPLFTAIALVIVLLLAYFLPP. Residues 30-223 lie on the Virion surface side of the membrane; sequence RVRGGGRVAA…CLCVSQRSNS (194 aa). Cystine bridges form between Cys-99-Cys-138, Cys-102-Cys-115, Cys-128-Cys-214, Cys-132-Cys-216, and Cys-192-Cys-208. In terms of domain architecture, C-type lectin spans 111–217; it reads YKGCCFYFTK…CSFLKPCLCV (107 aa).

The protein belongs to the epstein barr virus gp42 family. In terms of assembly, forms a complex with gp25 and gp85 via its N-terminus; this complex is used for invasion of B-lymphocytes. Interacts with human HLA-DRA and HLA-DRB1.

It localises to the virion membrane. The protein resides in the host membrane. Functionally, plays a role in virion attachment to host B-lymphocytes, through binding to leukocyte antigen (HLA) class II and subsequently participates in fusion of the virion with host membranes. May act as a tropism switch that directs fusion with B-lymphocytes and inhibits fusion with epithelial cells. Additionally, hampers T-cell recognition via HLA class II molecules through steric hindrance of T-cell receptor-class II-peptide interaction. In terms of biological role, soluble gp42 inhibits HLA class II-restricted antigen presentation to T-cells through binding to immature and mature HLA class II complexes. The sequence is that of Glycoprotein 42 from Epstein-Barr virus (strain B95-8) (HHV-4).